A 125-amino-acid chain; its full sequence is MLPEPHRLRRHSDFSLTVRRGRRMGRRDLVVHAFDRAQADELVSSGGPRFGLVVSKAVGPAVIRHRVARRLRHICIDLVDSVPRGTDVVIRALPGAATASSRDLEKQLRAGLLRLDLLAPVSNST.

The protein belongs to the RnpA family. In terms of assembly, consists of a catalytic RNA component (M1 or rnpB) and a protein subunit.

The catalysed reaction is Endonucleolytic cleavage of RNA, removing 5'-extranucleotides from tRNA precursor.. Its function is as follows. RNaseP catalyzes the removal of the 5'-leader sequence from pre-tRNA to produce the mature 5'-terminus. It can also cleave other RNA substrates such as 4.5S RNA. The protein component plays an auxiliary but essential role in vivo by binding to the 5'-leader sequence and broadening the substrate specificity of the ribozyme. In Rhodococcus opacus (strain B4), this protein is Ribonuclease P protein component.